A 110-amino-acid chain; its full sequence is U1-lycotoxin-Ls1ee (110 aa).

The first 20 residues, Met-1 to Ala-20, serve as a signal peptide directing secretion. Positions Glu-21–Arg-44 are excised as a propeptide. Intrachain disulfides connect Cys-47–Cys-62, Cys-54–Cys-71, Cys-61–Cys-89, and Cys-73–Cys-87.

Belongs to the neurotoxin 19 (CSTX) family. 03 subfamily. Expressed by the venom gland.

The protein localises to the secreted. The chain is U1-lycotoxin-Ls1ee from Lycosa singoriensis (Wolf spider).